Consider the following 64-residue polypeptide: MPKAKTHSGASKRFRRTGTGKIVRQKANRRHLLEHKSSKRTRRLDGRTTVAANDTKRVKSLLNG.

The segment covering 1 to 42 (MPKAKTHSGASKRFRRTGTGKIVRQKANRRHLLEHKSSKRTR) has biased composition (basic residues). The tract at residues 1–64 (MPKAKTHSGA…TKRVKSLLNG (64 aa)) is disordered.

It belongs to the bacterial ribosomal protein bL35 family.

In Mycobacterium ulcerans (strain Agy99), this protein is Large ribosomal subunit protein bL35.